Reading from the N-terminus, the 152-residue chain is Large ribosomal subunit protein bL9 (152 aa).

It belongs to the bacterial ribosomal protein bL9 family.

In terms of biological role, binds to the 23S rRNA. The sequence is that of Large ribosomal subunit protein bL9 from Mycobacterium marinum (strain ATCC BAA-535 / M).